Here is a 316-residue protein sequence, read N- to C-terminus: Transaldolase (316 aa).

Residue K131 is the Schiff-base intermediate with substrate of the active site.

The protein belongs to the transaldolase family. Type 1 subfamily. Homodimer.

Its subcellular location is the cytoplasm. The enzyme catalyses D-sedoheptulose 7-phosphate + D-glyceraldehyde 3-phosphate = D-erythrose 4-phosphate + beta-D-fructose 6-phosphate. It participates in carbohydrate degradation; pentose phosphate pathway; D-glyceraldehyde 3-phosphate and beta-D-fructose 6-phosphate from D-ribose 5-phosphate and D-xylulose 5-phosphate (non-oxidative stage): step 2/3. In terms of biological role, transaldolase is important for the balance of metabolites in the pentose-phosphate pathway. This Chromohalobacter salexigens (strain ATCC BAA-138 / DSM 3043 / CIP 106854 / NCIMB 13768 / 1H11) protein is Transaldolase.